The chain runs to 370 residues: Glutamate 5-kinase (370 aa).

Lys17 contributes to the ATP binding site. Substrate-binding residues include Ser57, Asp144, and Asn156. ATP is bound by residues Ser176–Asp177 and Thr220–Lys226. In terms of domain architecture, PUA spans Ser282–Pro360.

Belongs to the glutamate 5-kinase family.

Its subcellular location is the cytoplasm. The catalysed reaction is L-glutamate + ATP = L-glutamyl 5-phosphate + ADP. It functions in the pathway amino-acid biosynthesis; L-proline biosynthesis; L-glutamate 5-semialdehyde from L-glutamate: step 1/2. In terms of biological role, catalyzes the transfer of a phosphate group to glutamate to form L-glutamate 5-phosphate. The polypeptide is Glutamate 5-kinase (Mycolicibacterium gilvum (strain PYR-GCK) (Mycobacterium gilvum (strain PYR-GCK))).